A 225-amino-acid polypeptide reads, in one-letter code: UPF0758 protein XOO0495 (225 aa).

An MPN domain is found at 102 to 224; the sequence is ALSDPPSVGR…PVSLAERGWL (123 aa). 3 residues coordinate Zn(2+): H173, H175, and D186. A JAMM motif motif is present at residues 173–186; it reads HNHPSGNPEPSKAD.

Belongs to the UPF0758 family.

The protein is UPF0758 protein XOO0495 of Xanthomonas oryzae pv. oryzae (strain KACC10331 / KXO85).